Reading from the N-terminus, the 209-residue chain is Imidazoleglycerol-phosphate dehydratase (209 aa).

The protein belongs to the imidazoleglycerol-phosphate dehydratase family.

It localises to the cytoplasm. It carries out the reaction D-erythro-1-(imidazol-4-yl)glycerol 3-phosphate = 3-(imidazol-4-yl)-2-oxopropyl phosphate + H2O. It functions in the pathway amino-acid biosynthesis; L-histidine biosynthesis; L-histidine from 5-phospho-alpha-D-ribose 1-diphosphate: step 6/9. The polypeptide is Imidazoleglycerol-phosphate dehydratase (Nostoc sp. (strain PCC 7120 / SAG 25.82 / UTEX 2576)).